Here is a 278-residue protein sequence, read N- to C-terminus: Urease accessory protein UreD 3 (278 aa).

This sequence belongs to the UreD family. As to quaternary structure, ureD, UreF and UreG form a complex that acts as a GTP-hydrolysis-dependent molecular chaperone, activating the urease apoprotein by helping to assemble the nickel containing metallocenter of UreC. The UreE protein probably delivers the nickel.

The protein localises to the cytoplasm. Required for maturation of urease via the functional incorporation of the urease nickel metallocenter. The protein is Urease accessory protein UreD 3 of Bradyrhizobium sp. (strain BTAi1 / ATCC BAA-1182).